The following is a 584-amino-acid chain: MFS-type transporter gkaD (584 aa).

A compositionally biased stretch (low complexity) spans 1–11 (MAVDTETTTTT). Residues 1–60 (MAVDTETTTTTIPVTDSDRIDDQNNLTSNAIPHASEKTVPDSPASEQNEVSDESEDKPSK) are disordered. An N-linked (GlcNAc...) asparagine glycan is attached at Asn-25. 8 consecutive transmembrane segments (helical) span residues 65–85 (FGFY…SLEA), 99–119 (LGGA…QTAF), 134–154 (WPMI…GGSK), 167–187 (GIGS…LLPL), 196–216 (MIVS…GLIV), 223–243 (WVFY…FFFL), 262–282 (WIGN…LSWA), and 293–313 (VVVP…YEGS). An N-linked (GlcNAc...) asparagine glycan is attached at Asn-328. The next 6 helical transmembrane spans lie at 334-354 (AFAV…FLPV), 369-389 (VQLL…GTLL), 398-418 (LQHG…LLDA), 425-445 (WVGY…VLLP), 462-482 (TWSF…TAVF), and 536-556 (LNVV…LVFL).

The protein belongs to the major facilitator superfamily.

It is found in the membrane. In terms of biological role, MFS-type transporter; part of the gene cluster that mediates the biosynthesis of GKK1032, fungal natural products containing a macrocyclic para-cyclophane connected to a decahydrofluorene ring system that show potent antitumor activities. This is MFS-type transporter gkaD from Penicillium citrinum.